Reading from the N-terminus, the 141-residue chain is Nucleoside diphosphate kinase (141 aa).

Residues Lys-11, Phe-59, Arg-87, Thr-93, Arg-104, and Asn-114 each contribute to the ATP site. His-117 (pros-phosphohistidine intermediate) is an active-site residue.

It belongs to the NDK family. In terms of assembly, homotetramer. Requires Mg(2+) as cofactor.

The protein localises to the cytoplasm. The enzyme catalyses a 2'-deoxyribonucleoside 5'-diphosphate + ATP = a 2'-deoxyribonucleoside 5'-triphosphate + ADP. It carries out the reaction a ribonucleoside 5'-diphosphate + ATP = a ribonucleoside 5'-triphosphate + ADP. Its function is as follows. Major role in the synthesis of nucleoside triphosphates other than ATP. The ATP gamma phosphate is transferred to the NDP beta phosphate via a ping-pong mechanism, using a phosphorylated active-site intermediate. The protein is Nucleoside diphosphate kinase of Bdellovibrio bacteriovorus (strain ATCC 15356 / DSM 50701 / NCIMB 9529 / HD100).